A 280-amino-acid polypeptide reads, in one-letter code: Virginiamycin B lyase (280 aa).

Histidine 215 contributes to the substrate binding site. Glutamate 254 contributes to the Mg(2+) binding site. Histidine 256 acts as the Proton acceptor in catalysis. Glutamate 271 is a Mg(2+) binding site.

The protein belongs to the Vgb family. Monomer. Mg(2+) is required as a cofactor.

In terms of biological role, inactivates the type B streptogramin antibiotics by linearizing the lactone ring at the ester linkage, generating a free phenylglycine carboxylate and converting the threonyl moiety into 2-amino-butenoic acid. This is Virginiamycin B lyase from Mycobacterium sp. (strain KMS).